The chain runs to 29 residues: Sarcolamban B (29 aa).

The chain crosses the membrane as a helical span at residues 7–27; the sequence is LFTTFLILAFLLFLLYAFYEA.

In terms of assembly, interacts with SERCA. Strongly expressed in embryonic and larval somatic muscles and postembryonic heart.

The protein localises to the sarcoplasmic reticulum membrane. Functionally, plays an essential role in the regulation of calcium transport at the sarcoplasmic reticulum (SR), which is secondarily required for regular muscle contraction. The chain is Sarcolamban B from Drosophila melanogaster (Fruit fly).